The chain runs to 852 residues: Protein SEY1 (852 aa).

Residues 1-738 (MNGHFAAVGN…KRSAIGGITQ (738 aa)) are Cytoplasmic-facing. One can recognise a GB1/RHD3-type G domain in the interval 47–283 (GFNYHLISVF…FVGGVFLPEY (237 aa)). 57-64 (GSQSTGKS) is a GTP binding site. Residues 475–500 (QYRLFEKELDEVSARLRKEEMRRLAI) are a coiled coil. The helical transmembrane segment at 739-759 (VPLYFYIVLLIFGWNEIVMVL) threads the bilayer. Over 760-762 (RNP) the chain is Lumenal. A helical transmembrane segment spans residues 763 to 783 (MLFMLLLVMGGGTYVAYTLNL). At 784–852 (LGPMMQMANA…AQEVEEDDDI (69 aa)) the chain is on the cytoplasmic side. Residues 825 to 852 (RSQDNGIGMDRLDSRGKKAQEVEEDDDI) form a disordered region. Residues 834–845 (DRLDSRGKKAQE) are compositionally biased toward basic and acidic residues.

This sequence belongs to the TRAFAC class dynamin-like GTPase superfamily. GB1/RHD3 GTPase family. RHD3 subfamily.

Its subcellular location is the endoplasmic reticulum membrane. In terms of biological role, cooperates with the reticulon proteins and tubule-shaping DP1 family proteins to generate and maintain the structure of the tubular endoplasmic reticulum network. Has GTPase activity, which is required for its function in ER organization. The chain is Protein SEY1 from Chaetomium globosum (strain ATCC 6205 / CBS 148.51 / DSM 1962 / NBRC 6347 / NRRL 1970) (Soil fungus).